The following is a 689-amino-acid chain: DNA-directed RNA polymerase subunit beta' (689 aa).

Positions 69, 71, 87, and 90 each coordinate Zn(2+). Mg(2+)-binding residues include Asp-489, Asp-491, and Asp-493.

Belongs to the RNA polymerase beta' chain family. RpoC1 subfamily. As to quaternary structure, in plastids the minimal PEP RNA polymerase catalytic core is composed of four subunits: alpha, beta, beta', and beta''. When a (nuclear-encoded) sigma factor is associated with the core the holoenzyme is formed, which can initiate transcription. The cofactor is Mg(2+). Zn(2+) is required as a cofactor.

Its subcellular location is the plastid. The protein resides in the chloroplast. The catalysed reaction is RNA(n) + a ribonucleoside 5'-triphosphate = RNA(n+1) + diphosphate. DNA-dependent RNA polymerase catalyzes the transcription of DNA into RNA using the four ribonucleoside triphosphates as substrates. This is DNA-directed RNA polymerase subunit beta' from Lactuca sativa (Garden lettuce).